Here is a 274-residue protein sequence, read N- to C-terminus: tRNA (guanine-N(7)-)-methyltransferase (274 aa).

The tract at residues 16–40 is disordered; it reads ASASRGAATGSRGVAPAVPRGGAPA. 4 residues coordinate S-adenosyl-L-methionine: Glu-106, Glu-131, Asp-158, and Asp-181. Asp-181 is a catalytic residue. Substrate is bound by residues Lys-185, Asp-217, and 252-255; that span reads TKFE.

This sequence belongs to the class I-like SAM-binding methyltransferase superfamily. TrmB family.

The catalysed reaction is guanosine(46) in tRNA + S-adenosyl-L-methionine = N(7)-methylguanosine(46) in tRNA + S-adenosyl-L-homocysteine. Its pathway is tRNA modification; N(7)-methylguanine-tRNA biosynthesis. In terms of biological role, catalyzes the formation of N(7)-methylguanine at position 46 (m7G46) in tRNA. The chain is tRNA (guanine-N(7)-)-methyltransferase from Verminephrobacter eiseniae (strain EF01-2).